Consider the following 477-residue polypeptide: ATP synthase subunit beta (477 aa).

148–155 is a binding site for ATP; sequence GGAGVGKT.

It belongs to the ATPase alpha/beta chains family. F-type ATPases have 2 components, CF(1) - the catalytic core - and CF(0) - the membrane proton channel. CF(1) has five subunits: alpha(3), beta(3), gamma(1), delta(1), epsilon(1). CF(0) has three main subunits: a(1), b(2) and c(9-12). The alpha and beta chains form an alternating ring which encloses part of the gamma chain. CF(1) is attached to CF(0) by a central stalk formed by the gamma and epsilon chains, while a peripheral stalk is formed by the delta and b chains.

It localises to the cell inner membrane. It catalyses the reaction ATP + H2O + 4 H(+)(in) = ADP + phosphate + 5 H(+)(out). In terms of biological role, produces ATP from ADP in the presence of a proton gradient across the membrane. The catalytic sites are hosted primarily by the beta subunits. In Psychrobacter cryohalolentis (strain ATCC BAA-1226 / DSM 17306 / VKM B-2378 / K5), this protein is ATP synthase subunit beta.